Reading from the N-terminus, the 119-residue chain is Aspartate 1-decarboxylase (119 aa).

Ser25 functions as the Schiff-base intermediate with substrate; via pyruvic acid in the catalytic mechanism. Pyruvic acid (Ser) is present on Ser25. Thr57 is a substrate binding site. Tyr58 acts as the Proton donor in catalysis. Residue 73-75 participates in substrate binding; the sequence is GAA.

Belongs to the PanD family. In terms of assembly, heterooctamer of four alpha and four beta subunits. The cofactor is pyruvate. In terms of processing, is synthesized initially as an inactive proenzyme, which is activated by self-cleavage at a specific serine bond to produce a beta-subunit with a hydroxyl group at its C-terminus and an alpha-subunit with a pyruvoyl group at its N-terminus.

It localises to the cytoplasm. It catalyses the reaction L-aspartate + H(+) = beta-alanine + CO2. It participates in cofactor biosynthesis; (R)-pantothenate biosynthesis; beta-alanine from L-aspartate: step 1/1. Functionally, catalyzes the pyruvoyl-dependent decarboxylation of aspartate to produce beta-alanine. In Ruthia magnifica subsp. Calyptogena magnifica, this protein is Aspartate 1-decarboxylase.